The chain runs to 230 residues: Oxaloacetate tautomerase FAHD1, mitochondrial (230 aa).

The transit peptide at 1 to 26 directs the protein to the mitochondrion; that stretch reads MAAAAAAAAQRLLAASTKIIGVGRNY. Glu73, Glu75, and Asp104 together coordinate Mg(2+).

It belongs to the FAH family. Mg(2+) serves as cofactor. It depends on Mn(2+) as a cofactor.

It is found in the mitochondrion. It carries out the reaction oxaloacetate = enol-oxaloacetate. Functionally, tautomerase that converts enol-oxaloacetate, a strong inhibitor of succinate dehydrogenase, to the physiological keto form of oxaloacetate. The polypeptide is Oxaloacetate tautomerase FAHD1, mitochondrial (Oryza sativa subsp. japonica (Rice)).